The chain runs to 388 residues: Lamin tail domain-containing protein 1 (388 aa).

The LTD domain occupies 136 to 254 (EVGQFTSSSL…QAIAWYTPIH (119 aa)). The disordered stretch occupies residues 349 to 388 (EPHNTSTAGGRLDRQPRTRSTRPNRASGSKKKKTSESQKQ). A compositionally biased stretch (basic residues) spans 365 to 381 (RTRSTRPNRASGSKKKK).

The protein belongs to the intermediate filament family.

This Homo sapiens (Human) protein is Lamin tail domain-containing protein 1 (LMNTD1).